The sequence spans 169 residues: NADH-quinone oxidoreductase subunit B (169 aa).

4 residues coordinate [4Fe-4S] cluster: C45, C46, C111, and C141.

This sequence belongs to the complex I 20 kDa subunit family. NDH-1 is composed of 14 different subunits. Subunits NuoB, C, D, E, F, and G constitute the peripheral sector of the complex. [4Fe-4S] cluster serves as cofactor.

It localises to the cell membrane. It carries out the reaction a quinone + NADH + 5 H(+)(in) = a quinol + NAD(+) + 4 H(+)(out). In terms of biological role, NDH-1 shuttles electrons from NADH, via FMN and iron-sulfur (Fe-S) centers, to quinones in the respiratory chain. The immediate electron acceptor for the enzyme in this species is believed to be a menaquinone. Couples the redox reaction to proton translocation (for every two electrons transferred, four hydrogen ions are translocated across the cytoplasmic membrane), and thus conserves the redox energy in a proton gradient. In Clostridium beijerinckii (strain ATCC 51743 / NCIMB 8052) (Clostridium acetobutylicum), this protein is NADH-quinone oxidoreductase subunit B.